The following is a 64-amino-acid chain: Large ribosomal subunit protein bL35 (64 aa).

It belongs to the bacterial ribosomal protein bL35 family.

This is Large ribosomal subunit protein bL35 from Vibrio campbellii (strain ATCC BAA-1116).